A 282-amino-acid chain; its full sequence is UPF0761 membrane protein HAPS_1376 (282 aa).

Helical transmembrane passes span 32–52 (LLSLVPLIMVVFSVFTLLPIF), 89–109 (MGIISIIGLVVVAVMLISSID), 124–144 (VILSFVVYLAVLIFAPIFAGA), 170–190 (LLKFIPFVLTWLLFALVYLIV), 202–222 (VGALFAGVFFTLGKQIFIWYI), and 234–254 (ALATIPIMIVWIHLSWQVVLL).

This sequence belongs to the UPF0761 family.

The protein localises to the cell inner membrane. The sequence is that of UPF0761 membrane protein HAPS_1376 from Glaesserella parasuis serovar 5 (strain SH0165) (Haemophilus parasuis).